Consider the following 537-residue polypeptide: 2-succinyl-5-enolpyruvyl-6-hydroxy-3-cyclohexene-1-carboxylate synthase (537 aa).

The protein belongs to the TPP enzyme family. MenD subfamily. As to quaternary structure, homodimer. The cofactor is Mg(2+). Mn(2+) serves as cofactor. Thiamine diphosphate is required as a cofactor.

It catalyses the reaction isochorismate + 2-oxoglutarate + H(+) = 5-enolpyruvoyl-6-hydroxy-2-succinyl-cyclohex-3-ene-1-carboxylate + CO2. It functions in the pathway quinol/quinone metabolism; 1,4-dihydroxy-2-naphthoate biosynthesis; 1,4-dihydroxy-2-naphthoate from chorismate: step 2/7. The protein operates within quinol/quinone metabolism; menaquinone biosynthesis. Catalyzes the thiamine diphosphate-dependent decarboxylation of 2-oxoglutarate and the subsequent addition of the resulting succinic semialdehyde-thiamine pyrophosphate anion to isochorismate to yield 2-succinyl-5-enolpyruvyl-6-hydroxy-3-cyclohexene-1-carboxylate (SEPHCHC). This is 2-succinyl-5-enolpyruvyl-6-hydroxy-3-cyclohexene-1-carboxylate synthase from Desulfotalea psychrophila (strain LSv54 / DSM 12343).